A 236-amino-acid chain; its full sequence is tRNA1(Val) (adenine(37)-N6)-methyltransferase (236 aa).

The protein belongs to the methyltransferase superfamily. tRNA (adenine-N(6)-)-methyltransferase family.

Its subcellular location is the cytoplasm. The catalysed reaction is adenosine(37) in tRNA1(Val) + S-adenosyl-L-methionine = N(6)-methyladenosine(37) in tRNA1(Val) + S-adenosyl-L-homocysteine + H(+). In terms of biological role, specifically methylates the adenine in position 37 of tRNA(1)(Val) (anticodon cmo5UAC). This is tRNA1(Val) (adenine(37)-N6)-methyltransferase from Aeromonas salmonicida (strain A449).